The sequence spans 770 residues: uncharacterized protein (770 aa).

The N-terminal stretch at 1-24 (MVSAAWLRYPSLLTLGILVSRVAA) is a signal peptide. Asn-78, Asn-204, Asn-533, and Asn-638 each carry an N-linked (GlcNAc...) asparagine glycan. The interval 746–770 (SWGTGQNDVPPSLGAGIKRDGLRFT) is disordered.

It belongs to the glycosyl hydrolase 92 family.

It is found in the secreted. This is an uncharacterized protein from Arthroderma benhamiae (strain ATCC MYA-4681 / CBS 112371) (Trichophyton mentagrophytes).